Reading from the N-terminus, the 179-residue chain is Iron sulfur cluster assembly protein 1, mitochondrial (179 aa).

Residues 160 to 179 (RSVKQPTLGPEAAQAETIAT) are disordered.

This sequence belongs to the NifU family. In terms of assembly, component of the core Fe-S cluster (ISC) assembly machinery. It depends on [2Fe-2S] cluster as a cofactor.

It is found in the mitochondrion matrix. Its pathway is cofactor biosynthesis; iron-sulfur cluster biosynthesis. Its function is as follows. Scaffold protein for the de novo synthesis of iron-sulfur (Fe-S) clusters within mitochondria, which is required for maturation of both mitochondrial and cytoplasmic [2Fe-2S] and [4Fe-4S] proteins. First, a [2Fe-2S] cluster is transiently assembled on the scaffold protein ISU1. In a second step, the cluster is released from ISU1, transferred to a glutaredoxin, followed by the formation of mitochondrial [2Fe-2S] proteins, the synthesis of [4Fe-4S] clusters and their target-specific insertion into the recipient apoproteins. Cluster assembly on ISU1 depends on the function of the cysteine desulfurase complex NFS1-ISD11, which serves as the sulfur donor for cluster synthesis, the iron-binding protein frataxin as the putative iron donor, and the electron transfer chain comprised of ferredoxin reductase and ferredoxin, which receive their electrons from NADH. The sequence is that of Iron sulfur cluster assembly protein 1, mitochondrial (ISU1) from Debaryomyces hansenii (strain ATCC 36239 / CBS 767 / BCRC 21394 / JCM 1990 / NBRC 0083 / IGC 2968) (Yeast).